Here is a 795-residue protein sequence, read N- to C-terminus: ATP-dependent RNA helicase DHX15 (795 aa).

The disordered stretch occupies residues 1-111; it reads MSKRHRLDLG…HTGHTGHTSL (111 aa). Position 15 is a phosphoserine (Ser-15). Over residues 20-62 the composition is skewed to basic and acidic residues; it reads AGTDGKDRERDRDREDRSKDRDRERDRGDREREREKEKEKELR. The span at 79–110 shows a compositional bias: low complexity; that stretch reads ASHSAHSTHSAHSTHSTHSAHSTHTGHTGHTS. The 167-residue stretch at 147-313 folds into the Helicase ATP-binding domain; that stretch reads TDILVRHQSF…FDNCPLLTIP (167 aa). 160-167 provides a ligand contact to ATP; sequence GETGSGKT. A DEAH box motif is present at residues 260 to 263; that stretch reads DEAH. One can recognise a Helicase C-terminal domain in the interval 338–518; it reads TVIQIHMCEE…SVVLQLKKLG (181 aa). Lys-488 is modified (N6-acetyllysine). Residue Lys-786 forms a Glycyl lysine isopeptide (Lys-Gly) (interchain with G-Cter in SUMO2) linkage.

It belongs to the DEAD box helicase family. DEAH subfamily. DDX15/PRP43 sub-subfamily. Component of the U11/U12 snRNPs that are part of the U12-type spliceosome. Identified in the Intron Large spliceosome complex (IL, also named intron lariat spliceosome), a post-mRNA release spliceosomal complex containing the excised intron, U2, U5 and U6 snRNPs, and splicing factors; the association may be transient. The IL complex exists in two distinct conformations, one with the DHX15 (ILS2) and one without (ILS1). Interacts with TFIP11 (via G-patch domain); indicative for a recruitment to the IL complex. Interacts with SSB/La. Interacts with GPATCH2 (via G-patch domain); promoting the RNA helicase activity. Interacts with NKRF (via G-patch domain); promoting the RNA helicase activity. Interacts with NLRP6. In terms of tissue distribution, ubiquitous.

It localises to the nucleus. The protein localises to the nucleolus. The enzyme catalyses ATP + H2O = ADP + phosphate + H(+). With respect to regulation, ATPase activity is enhanced upon binding to G-patch domain-containing proteins. G-patch domain-containing proteins act like a brace that tethers mobile sections of DHX15 together, stabilizing a functional conformation with high RNA affinity, thereby promoting the ATPase activity. RNA helicase involved in mRNA processing and antiviral innate immunity. Pre-mRNA processing factor involved in disassembly of spliceosomes after the release of mature mRNA. In cooperation with TFIP11 seem to be involved in the transition of the U2, U5 and U6 snRNP-containing IL complex to the snRNP-free IS complex leading to efficient debranching and turnover of excised introns. Plays a key role in antiviral innate immunity by promoting both MAVS-dependent signaling and NLRP6 inflammasome. Acts as an RNA virus sensor: recognizes and binds viral double stranded RNA (dsRNA) and activates the MAVS-dependent signaling to produce interferon-beta and interferon lambda-3 (IFNL3). Involved in intestinal antiviral innate immunity together with NLRP6: recognizes and binds viral dsRNA and promotes activation of the NLRP6 inflammasome in intestinal epithelial cells to restrict infection by enteric viruses. The NLRP6 inflammasome acts by promoting maturation and secretion of IL18 in the extracellular milieu. Also involved in antibacterial innate immunity by promoting Wnt-induced antimicrobial protein expression in Paneth cells. In Mus musculus (Mouse), this protein is ATP-dependent RNA helicase DHX15.